The primary structure comprises 553 residues: Putative transport protein CKO_00031 (553 aa).

5 consecutive transmembrane segments (helical) span residues 4 to 24, 28 to 48, 65 to 85, 95 to 115, and 158 to 178; these read IALT…IGNI, GVGF…HFVD, FGLI…FFAS, LFAI…HKIF, and MSYA…MWLM. RCK C-terminal domains are found at residues 192–276 and 279–361; these read QHED…VIGQ and DTSL…VVGN. 6 helical membrane passes run 371 to 391, 393 to 413, 437 to 457, 464 to 484, 493 to 513, and 533 to 553; these read MLPV…PLFV, GFPV…ALIL, LGIV…FIDT, LSWI…VGLL, YLTL…LAFA, and LVMF…WGLG.

This sequence belongs to the AAE transporter (TC 2.A.81) family. YidE subfamily.

Its subcellular location is the cell membrane. This is Putative transport protein CKO_00031 from Citrobacter koseri (strain ATCC BAA-895 / CDC 4225-83 / SGSC4696).